We begin with the raw amino-acid sequence, 374 residues long: MEFTDVFYNLENEKQFLAEIDELLTIPYEKNELEIGVSKFLSFINKYGEPYLITEFQLQRCMEKFLNSPLYQLDENAVLSIFYDCFFFLKEQQTLKFIIIVFQSEIQENEYCLRLLASTGFIPVLIKAMKQFKDRSENVAFTSFRYALFLVYYICRSRRLSPTDLVAIDEYFLVNLFKTSEEAWNDEDMDSFGMCVLTLLSINEQFMLVRLASKGSFEIANGIMDLLSSSKVDNGIYSEGLVFTLNREKDPRSRMLILKQLFLLFTTPATYEIFYTNDLNVLIDIFIREINNIPDELSDLRYAYLQVLIPLLENTQVRHPPHYKTKCIVDAVNNVLISHSKSSNMEDARTTDVAIRVLEVPWLQQEMKSLGTAQ.

The protein belongs to the LDB17 family.

Its subcellular location is the cytoplasm. The protein resides in the nucleus. It is found in the cell tip. In terms of biological role, may be involved in protein-linked oligosaccharide phosphorylation. This chain is Protein dip1 (dip1), found in Schizosaccharomyces pombe (strain 972 / ATCC 24843) (Fission yeast).